The chain runs to 535 residues: CTP synthase (535 aa).

The segment at M1–L268 is amidoligase domain. CTP is bound at residue S14. S14 contributes to the UTP binding site. An ATP-binding site is contributed by S15–I20. Y55 is a binding site for L-glutamine. D72 contributes to the ATP binding site. Residues D72 and E142 each coordinate Mg(2+). Residues D149–E151, K189–Q194, and K225 each bind CTP. UTP is bound by residues K189–Q194 and K225. A Glutamine amidotransferase type-1 domain is found at T293–K535. G355 contacts L-glutamine. C382 serves as the catalytic Nucleophile; for glutamine hydrolysis. L-glutamine is bound by residues L383–Q386, E406, and R463. Active-site residues include H508 and E510.

The protein belongs to the CTP synthase family. As to quaternary structure, homotetramer.

The enzyme catalyses UTP + L-glutamine + ATP + H2O = CTP + L-glutamate + ADP + phosphate + 2 H(+). It catalyses the reaction L-glutamine + H2O = L-glutamate + NH4(+). The catalysed reaction is UTP + NH4(+) + ATP = CTP + ADP + phosphate + 2 H(+). Its pathway is pyrimidine metabolism; CTP biosynthesis via de novo pathway; CTP from UDP: step 2/2. Its activity is regulated as follows. Allosterically activated by GTP, when glutamine is the substrate; GTP has no effect on the reaction when ammonia is the substrate. The allosteric effector GTP functions by stabilizing the protein conformation that binds the tetrahedral intermediate(s) formed during glutamine hydrolysis. Inhibited by the product CTP, via allosteric rather than competitive inhibition. In terms of biological role, catalyzes the ATP-dependent amination of UTP to CTP with either L-glutamine or ammonia as the source of nitrogen. Regulates intracellular CTP levels through interactions with the four ribonucleotide triphosphates. The protein is CTP synthase of Clostridium acetobutylicum (strain ATCC 824 / DSM 792 / JCM 1419 / IAM 19013 / LMG 5710 / NBRC 13948 / NRRL B-527 / VKM B-1787 / 2291 / W).